The sequence spans 220 residues: Ribose-5-phosphate isomerase A (220 aa).

Residues 25 to 28, 80 to 83, and 93 to 96 contribute to the substrate site; these read TGST, DGAD, and KGGG. Glu-102 functions as the Proton acceptor in the catalytic mechanism. Lys-120 is a substrate binding site.

The protein belongs to the ribose 5-phosphate isomerase family. Homodimer.

It carries out the reaction aldehydo-D-ribose 5-phosphate = D-ribulose 5-phosphate. It functions in the pathway carbohydrate degradation; pentose phosphate pathway; D-ribose 5-phosphate from D-ribulose 5-phosphate (non-oxidative stage): step 1/1. Functionally, catalyzes the reversible conversion of ribose-5-phosphate to ribulose 5-phosphate. This Bacillus cereus (strain ZK / E33L) protein is Ribose-5-phosphate isomerase A.